We begin with the raw amino-acid sequence, 372 residues long: Coxsackievirus and adenovirus receptor homolog (372 aa).

Positions 1–22 (MDMRTSFLCVTYVILLTGSACG) are cleaved as a signal peptide. Ig-like C2-type domains follow at residues 23–140 (LQIT…YLLT) and 130–234 (PGIA…VTIT). Topologically, residues 23-241 (LQITSTGQTS…TITQPPNTAG (219 aa)) are extracellular. Cystine bridges form between C45–C124, C150–C227, and C166–C216. N-linked (GlcNAc...) asparagine glycosylation is present at N205. The helical transmembrane segment at 242–262 (IIAGVIICILLLLILLALILF) threads the bilayer. The Cytoplasmic segment spans residues 263 to 372 (CCCRARHKKK…PAQNKDGSIV (110 aa)). Residues 286 to 352 (PPPKSRVSTA…PPSRMAGPNL (67 aa)) are disordered. Residues 291–317 (RVSTARSFTSVGSQRSSLGSMSPSNLH) are compositionally biased toward polar residues. The span at 318–336 (EYSKPQYDKIPSEEYDRPP) shows a compositional bias: basic and acidic residues.

Monomer. Probably homodimer formed by 2 molecules on adjacent cells.

It localises to the cell membrane. The protein localises to the basolateral cell membrane. It is found in the cell junction. The protein resides in the tight junction. Its subcellular location is the adherens junction. Its function is as follows. May function as a homophilic cell adhesion molecule and be essential for tight junction integrity. May also be involved in transepithelial migration of leukocytes through adhesive interactions with jaml. The interaction between both receptors may also mediate the activation of gamma-delta T-cells, a subpopulation of T-cells residing in epithelia and involved in tissue homeostasis and repair. In Danio rerio (Zebrafish), this protein is Coxsackievirus and adenovirus receptor homolog (cxadr).